Reading from the N-terminus, the 412-residue chain is DNA primase DnaG (412 aa).

Positions 165-243 (PELIIVEGRA…KLDYVARAPT (79 aa)) constitute a Toprim domain. Residues Glu-171, Asp-216, and Asp-218 each contribute to the Mg(2+) site.

Belongs to the archaeal DnaG primase family. Forms a ternary complex with MCM helicase and DNA. Component of the archaeal exosome complex. Requires Mg(2+) as cofactor.

The catalysed reaction is ssDNA + n NTP = ssDNA/pppN(pN)n-1 hybrid + (n-1) diphosphate.. RNA polymerase that catalyzes the synthesis of short RNA molecules used as primers for DNA polymerase during DNA replication. Also part of the exosome, which is a complex involved in RNA degradation. Acts as a poly(A)-binding protein that enhances the interaction between heteromeric, adenine-rich transcripts and the exosome. This is DNA primase DnaG from Sulfolobus acidocaldarius (strain ATCC 33909 / DSM 639 / JCM 8929 / NBRC 15157 / NCIMB 11770).